The following is a 332-amino-acid chain: Ketol-acid reductoisomerase (NADP(+)) (332 aa).

One can recognise a KARI N-terminal Rossmann domain in the interval 2–182; that stretch reads ANIYYDEDAS…GATRAGLIET (181 aa). NADP(+) is bound by residues 25–28, serine 51, serine 53, and 83–86; these read YGSQ and DTVQ. Histidine 108 is an active-site residue. An NADP(+)-binding site is contributed by glycine 134. Positions 183 to 327 constitute a KARI C-terminal knotted domain; sequence TFKEETETDL…KELRKMMPWL (145 aa). 4 residues coordinate Mg(2+): aspartate 191, glutamate 195, glutamate 227, and glutamate 231. Serine 252 contacts substrate.

It belongs to the ketol-acid reductoisomerase family. Mg(2+) is required as a cofactor.

It catalyses the reaction (2R)-2,3-dihydroxy-3-methylbutanoate + NADP(+) = (2S)-2-acetolactate + NADPH + H(+). The catalysed reaction is (2R,3R)-2,3-dihydroxy-3-methylpentanoate + NADP(+) = (S)-2-ethyl-2-hydroxy-3-oxobutanoate + NADPH + H(+). It participates in amino-acid biosynthesis; L-isoleucine biosynthesis; L-isoleucine from 2-oxobutanoate: step 2/4. It functions in the pathway amino-acid biosynthesis; L-valine biosynthesis; L-valine from pyruvate: step 2/4. In terms of biological role, involved in the biosynthesis of branched-chain amino acids (BCAA). Catalyzes an alkyl-migration followed by a ketol-acid reduction of (S)-2-acetolactate (S2AL) to yield (R)-2,3-dihydroxy-isovalerate. In the isomerase reaction, S2AL is rearranged via a Mg-dependent methyl migration to produce 3-hydroxy-3-methyl-2-ketobutyrate (HMKB). In the reductase reaction, this 2-ketoacid undergoes a metal-dependent reduction by NADPH to yield (R)-2,3-dihydroxy-isovalerate. In Sulfurihydrogenibium sp. (strain YO3AOP1), this protein is Ketol-acid reductoisomerase (NADP(+)).